The primary structure comprises 790 residues: E3 ubiquitin-protein ligase Jade-2 (790 aa).

2 disordered regions span residues 1–52 (MEEK…PSEV) and 111–130 (GPPA…SQPD). Phosphoserine occurs at positions 9 and 15. Residues 9–28 (SISSDNSDTTDSHATSTSAS) are compositionally biased toward low complexity. 2 positions are modified to N6-acetyllysine: lysine 32 and lysine 38. The residue at position 117 (serine 117) is a Phosphoserine. The segment at 199 to 249 (DVVCDVCRSPEGEDGNEMVFCDKCNVCVHQACYGILKVPTGSWLCRTCALG) adopts a PHD-type 1 zinc-finger fold. Residues 251-285 (QPKCLLCPKRGGALKPTRSGTKWVHVSCALWIPEV) form a C2HC pre-PHD-type zinc finger. Lysine 298 bears the N6-acetyllysine mark. Residues 309–365 (LSCSLCKECTGTCIQCSMPSCVTAFHVTCAFDHGLEMRTILADNDEVKFKSFCQEHS) form a PHD-type 2 zinc finger. Disordered regions lie at residues 361-386 (CQEH…AGED) and 578-777 (SFMR…PREA). Positions 372–381 (EPTSEPTEPS) are enriched in polar residues. Residues 593-606 (KARGRTRLPAKKKP) are compositionally biased toward basic residues. Positions 684–693 (AASVAADSDV) are enriched in low complexity. The span at 737-747 (ERPKVSLHFDT) shows a compositional bias: basic and acidic residues. Residues 757–767 (EMSDSDVEAED) are compositionally biased toward acidic residues.

This sequence belongs to the JADE family. Component of the HBO1 complex composed at least of ING4 or ING5, MYST2/HBO1, MEAF6, and one of JADE1, JADE2 and JADE3. Interacts (via C-terminus) with KDM1A (via AOD/Tower domain).

The enzyme catalyses S-ubiquitinyl-[E2 ubiquitin-conjugating enzyme]-L-cysteine + [acceptor protein]-L-lysine = [E2 ubiquitin-conjugating enzyme]-L-cysteine + N(6)-ubiquitinyl-[acceptor protein]-L-lysine.. It participates in protein modification; protein ubiquitination. Functionally, scaffold subunit of some HBO1 complexes, which have a histone H4 acetyltransferase activity. Acts as an E3 ubiquitin-protein ligase mediating the ubiquitination and subsequent proteasomal degradation of target protein histone demethylase KDM1A. Also acts as a ubiquitin ligase E3 toward itself. Positive regulator of neurogenesis. The sequence is that of E3 ubiquitin-protein ligase Jade-2 (JADE2) from Homo sapiens (Human).